We begin with the raw amino-acid sequence, 429 residues long: Queuine tRNA-ribosyltransferase accessory subunit 2 (429 aa).

4 residues coordinate Zn(2+): Cys-330, Cys-332, Cys-335, and His-361.

It belongs to the queuine tRNA-ribosyltransferase family. QTRT2 subfamily. As to quaternary structure, heterodimer of a catalytic subunit and an accessory subunit. Zn(2+) serves as cofactor.

Its subcellular location is the cytoplasm. Its function is as follows. Non-catalytic subunit of the queuine tRNA-ribosyltransferase (TGT) that catalyzes the base-exchange of a guanine (G) residue with queuine (Q) at position 34 (anticodon wobble position) in tRNAs with GU(N) anticodons (tRNA-Asp, -Asn, -His and -Tyr), resulting in the hypermodified nucleoside queuosine (7-(((4,5-cis-dihydroxy-2-cyclopenten-1-yl)amino)methyl)-7-deazaguanosine). This chain is Queuine tRNA-ribosyltransferase accessory subunit 2, found in Culex quinquefasciatus (Southern house mosquito).